The sequence spans 79 residues: Sperm-specific basic nuclear protein SP4 (79 aa).

Residues methionine 1–serine 79 form a disordered region. A compositionally biased stretch (basic residues) spans arginine 9–alanine 60. Repeats lie at residues arginine 45–alanine 52 and arginine 53–alanine 60. Over residues arginine 61–serine 79 the composition is skewed to basic and acidic residues.

It is found in the nucleus. The sequence is that of Sperm-specific basic nuclear protein SP4 (sp4-a) from Xenopus laevis (African clawed frog).